We begin with the raw amino-acid sequence, 470 residues long: Uronate isomerase (470 aa).

Belongs to the metallo-dependent hydrolases superfamily. Uronate isomerase family.

The enzyme catalyses D-glucuronate = D-fructuronate. It carries out the reaction aldehydo-D-galacturonate = keto-D-tagaturonate. Its pathway is carbohydrate metabolism; pentose and glucuronate interconversion. The protein is Uronate isomerase of Cronobacter sakazakii (strain ATCC BAA-894) (Enterobacter sakazakii).